Here is a 408-residue protein sequence, read N- to C-terminus: Na(+)/H(+) antiporter NhaA 2 (408 aa).

The next 11 membrane-spanning stretches (helical) occupy residues 36–56 (GILLLICVLVSLIVANTGLGV), 79–99 (ILLWINDGLMAVFFLLVGLEI), 115–135 (ALPVLAAVGGVIIPALIYFLF), 145–165 (GWGIPMATDIAFALGILSLLG), 174–194 (IFLAALAIVDDLIAILVIAVF), 197–217 (SELHFLYLGYAGGIFVLLMVF), 225–245 (LFFYLLPGAVMWYFIHHSGIH), 281–301 (FIIMPVFALANTNIAFESEML), 310–330 (LGIILGLVLGKPIGIFVMSWL), 348–368 (VLGLGLLGGIGFTMSIFIALL), and 381–401 (FAILTASVLAGAAGFILLSSY).

It belongs to the NhaA Na(+)/H(+) (TC 2.A.33) antiporter family.

Its subcellular location is the cell inner membrane. It catalyses the reaction Na(+)(in) + 2 H(+)(out) = Na(+)(out) + 2 H(+)(in). Functionally, na(+)/H(+) antiporter that extrudes sodium in exchange for external protons. The chain is Na(+)/H(+) antiporter NhaA 2 from Flavobacterium johnsoniae (strain ATCC 17061 / DSM 2064 / JCM 8514 / BCRC 14874 / CCUG 350202 / NBRC 14942 / NCIMB 11054 / UW101) (Cytophaga johnsonae).